The sequence spans 478 residues: Dynein regulatory complex subunit 4 (478 aa).

Residues 1-12 (MAPKKKGKKGKA) are compositionally biased toward basic residues. Residues 1–33 (MAPKKKGKKGKAKGTPIVDGLAPEDMSKEQVEE) are disordered. Positions 1–114 (MAPKKKGKKG…LLYEHQNNLT (114 aa)) are regulates microtubule-binding. The tract at residues 115-258 (EMKAEGTVVM…NSLKEQMEDM (144 aa)) is microtubule-binding. The stretch at 242 to 427 (LNNLALINSL…KDLQYELAQV (186 aa)) forms a coiled coil. Residues 357–478 (QQKTGFKNLV…GPAGLVGTPT (122 aa)) are interaction with SMO.

The protein belongs to the DRC4 family. Component of the nexin-dynein regulatory complex (N-DRC). Interacts with microtubules. Interacts with SMO. Interacts (via coiled-coil domains) with RAB3B (in GTP-bound form). Interacts with DRC1. Interacts with DRC7. Expressed in respiratory epithelial cells (at protein level). Expressed in the heart, skeletal muscle, pancreas, liver, brain, trachea and lung. Weakly or not expressed in placenta and kidney.

Its subcellular location is the cytoplasm. The protein localises to the cytoskeleton. It localises to the cell projection. The protein resides in the cilium. It is found in the flagellum. Its subcellular location is the cilium axoneme. The protein localises to the cilium basal body. It localises to the golgi apparatus. The protein resides in the flagellum axoneme. Component of the nexin-dynein regulatory complex (N-DRC), a key regulator of ciliary/flagellar motility which maintains the alignment and integrity of the distal axoneme and regulates microtubule sliding in motile axonemes. Plays an important role in the assembly of the N-DRC linker. Plays dual roles at both the primary (or non-motile) cilia to regulate hedgehog signaling and in motile cilia to coordinate cilia movement. Required for proper motile cilia functioning. Positively regulates ciliary smoothened (SMO)-dependent Hedgehog (Hh) signaling pathway by facilitating the trafficking of SMO into the cilium and the stimulation of SMO activity in a GRK2-dependent manner. This chain is Dynein regulatory complex subunit 4 (GAS8), found in Homo sapiens (Human).